The primary structure comprises 93 residues: MKFVLVLVSLALLVSLASVQGNNYCGRHLSETLAYMCPELEGASKRSGAMGAAAMYGTRGWRWAAMGGNRGKRGVVEECCYQSCTLDELLTYC.

The first 21 residues, 1-21 (MKFVLVLVSLALLVSLASVQG), serve as a signal peptide directing secretion. 3 cysteine pairs are disulfide-bonded: cysteine 25–cysteine 80, cysteine 37–cysteine 93, and cysteine 79–cysteine 84. Positions 47 to 71 (SGAMGAAAMYGTRGWRWAAMGGNRG) are cleaved as a propeptide — c peptide like.

Belongs to the insulin family. As to quaternary structure, heterodimer of a B chain and an A chain linked by two disulfide bonds. Located in 4 pairs of medial neurosecretory cells in the brain.

The protein resides in the secreted. The chain is Bombyxin-related peptide B from Agrius convolvuli (Convolvulus hawk-moth).